The following is a 369-amino-acid chain: Phospho-N-acetylmuramoyl-pentapeptide-transferase (369 aa).

A run of 10 helical transmembrane segments spans residues 3–23 (ALLG…PLFI), 53–73 (GGIV…LLTW), 81–101 (VTPS…VGFL), 118–138 (WQKI…AITL), 162–182 (FMAL…CLIV), 198–218 (LAAG…FWQF), 240–260 (PLDL…FLWW), 267–287 (IFMG…LAIL), 290–310 (TELL…SVVL), and 347–367 (FWII…LEWI).

It belongs to the glycosyltransferase 4 family. MraY subfamily. It depends on Mg(2+) as a cofactor.

The protein resides in the cell membrane. It catalyses the reaction UDP-N-acetyl-alpha-D-muramoyl-L-alanyl-gamma-D-glutamyl-meso-2,6-diaminopimeloyl-D-alanyl-D-alanine + di-trans,octa-cis-undecaprenyl phosphate = di-trans,octa-cis-undecaprenyl diphospho-N-acetyl-alpha-D-muramoyl-L-alanyl-D-glutamyl-meso-2,6-diaminopimeloyl-D-alanyl-D-alanine + UMP. Its pathway is cell wall biogenesis; peptidoglycan biosynthesis. Catalyzes the initial step of the lipid cycle reactions in the biosynthesis of the cell wall peptidoglycan: transfers peptidoglycan precursor phospho-MurNAc-pentapeptide from UDP-MurNAc-pentapeptide onto the lipid carrier undecaprenyl phosphate, yielding undecaprenyl-pyrophosphoryl-MurNAc-pentapeptide, known as lipid I. The protein is Phospho-N-acetylmuramoyl-pentapeptide-transferase of Clavibacter sepedonicus (Clavibacter michiganensis subsp. sepedonicus).